The sequence spans 223 residues: Uracil-DNA glycosylase (223 aa).

D67 (proton acceptor) is an active-site residue.

This sequence belongs to the uracil-DNA glycosylase (UDG) superfamily. UNG family.

The protein resides in the cytoplasm. It catalyses the reaction Hydrolyzes single-stranded DNA or mismatched double-stranded DNA and polynucleotides, releasing free uracil.. Excises uracil residues from the DNA which can arise as a result of misincorporation of dUMP residues by DNA polymerase or due to deamination of cytosine. This Borrelia duttonii (strain Ly) protein is Uracil-DNA glycosylase.